Consider the following 64-residue polypeptide: MGKIFFFVLMIAIIGSTFLIEEALGSLVGCPRPNFLPSWNRCKCICKNNKPMCRKLPNLLKTTA.

Residues 1 to 25 form the signal peptide; sequence MGKIFFFVLMIAIIGSTFLIEEALG.

It belongs to the ant myrmeciitoxin-01 family. Homodimer; disulfide-linked. Post-translationally, contains 2 intrachain disulfide bonds (per chain) and 1 interchain disulfide bond. Expressed by the venom gland.

It is found in the secreted. In terms of biological role, may have antimicrobial properties, like most ant linear peptides. In Myrmecia gulosa (Red bulldog ant), this protein is U-myrmeciitoxin(01)-Mg4b.